Consider the following 337-residue polypeptide: MATIKDVAKLAAVSTTTVSHVINKTRFVAEATQKRVWEAVEELNYAPSAVARSLKCNTTRTIGMLVTQSFNPFFAEVMHGVENYCYKQGYTLFMCNTEGDLEKQKHYLRMLAEKRVDGLLVMCSDLNEQLLTLLEKNTELPMVIMDWGPDSPRTDKIIDNSEEGGYLATKHLIENGHTHIACITGQADKVTCKERVRGFERAHADANLSFNPEWILEGDFECASASKAVDKILSIEESKRPTALFCFNDIMALAAISKIQQSGLRVPEDISVIGYDNIELSAYFSPPLTTIHQPKRRVGKTAVEILLERIKDKDHERRVFEMQPEVVTRSSVLNRLK.

The HTH lacI-type domain maps to 2-56; it reads ATIKDVAKLAAVSTTTVSHVINKTRFVAEATQKRVWEAVEELNYAPSAVARSLKC. Residues 4 to 23 constitute a DNA-binding region (H-T-H motif); it reads IKDVAKLAAVSTTTVSHVIN. Residues 48 to 56 mediate DNA binding; the sequence is SAVARSLKC. Residues F73, K189, T191, F220, and D276 each coordinate hypoxanthine.

As to quaternary structure, homodimer.

The protein operates within purine metabolism; purine nucleotide biosynthesis [regulation]. In terms of biological role, is the main repressor of the genes involved in the de novo synthesis of purine nucleotides, regulating purB, purC, purEK, purF, purHD, purL, purMN and guaBA expression. PurR is allosterically activated to bind its cognate DNA by binding the purine corepressors, hypoxanthine or guanine, thereby effecting transcription repression. In Aliivibrio fischeri (strain MJ11) (Vibrio fischeri), this protein is HTH-type transcriptional repressor PurR.